A 440-amino-acid polypeptide reads, in one-letter code: MLLSPKFSLSTIHVRLTAKGLLRNLRLPSGLRKNTVIFHTVEKGRQKNPRSLCIQTQTAPDVLSTERTLELADYKTKCENQSGFILHLKQLLSCGNTKFEALTVVIQHLLSEREEALKQHKTLSQELVSLRGELVAASSTCEKLEKARNDLQTAYEGFVQKLNQQHQTDQTELENRLKEFYTAECEKLQSIYIEEAEKYKTQLQEQFDNLNAAHETTKLEIEASHSEKVELLKKTYETSLSEIKKSHEMEKKLLENLLNEKQESLEKQINDLKSENDALNERLKSEEQKQLSREKANSKNPQVMYLEQELESLKAVLEIKNEKLHQQDLKLMKMEKLVDNNTTLVDKLTRFQQENEELKARMDRHMAISRQLSTEQAALQESLEKESKVNKRLSMENEELLWKLHNGDLCSPKRSPTSSAIPFQSPRNSGSFSSPSISPR.

Positions 106–401 (IQHLLSEREE…RLSMENEELL (296 aa)) form a coiled coil. A phosphoserine mark is found at serine 373, serine 394, serine 415, serine 425, serine 429, serine 431, serine 433, serine 434, and serine 438. Residues 407–440 (GDLCSPKRSPTSSAIPFQSPRNSGSFSSPSISPR) are disordered. Positions 425–440 (SPRNSGSFSSPSISPR) are enriched in low complexity.

This sequence belongs to the MTUS1 family. As to quaternary structure, homodimer. Interacts with AGTR2. Interacts with PTPN6. As to expression, present in neurons (at protein level).

The protein localises to the mitochondrion. It is found in the golgi apparatus. The protein resides in the cell membrane. Its subcellular location is the nucleus. Its function is as follows. Cooperates with AGTR2 to inhibit ERK2 activation and cell proliferation. May be required for AGTR2 cell surface expression. Together with PTPN6, induces UBE2V2 expression upon angiotensin-II stimulation. This chain is Microtubule-associated tumor suppressor 1 homolog (Mtus1), found in Rattus norvegicus (Rat).